Here is a 214-residue protein sequence, read N- to C-terminus: MPEILKIKPTRMELLKLKRRVKLAERGHKLLKEKQDALIMEFFTIYDEALSLRRELIRKMEEAFNSLRRAQVDVGALRLKEIAIGVKPNKEIEIKTRNIMGVRVPLIEVPELKRKASERGYAFVSTTSTVDMAAEKFEEVLELAIRLAEVEESLKRLGKEIEKTKRRVNALEYIIIPRMENTIKFIEQHLDEMERENFFRLKRVKAILEARQSM.

Belongs to the V-ATPase D subunit family. Has multiple subunits with at least A(3), B(3), C, D, E, F, H, I and proteolipid K(x).

The protein resides in the cell membrane. Its function is as follows. Component of the A-type ATP synthase that produces ATP from ADP in the presence of a proton gradient across the membrane. The chain is A-type ATP synthase subunit D from Pyrococcus horikoshii (strain ATCC 700860 / DSM 12428 / JCM 9974 / NBRC 100139 / OT-3).